Consider the following 228-residue polypeptide: Orotidine 5'-phosphate decarboxylase (228 aa).

Residues Asp-10, Lys-33, Asp-60–Thr-69, Thr-116, Arg-178, Gln-187, Gly-207, and Arg-208 contribute to the substrate site. Lys-62 acts as the Proton donor in catalysis.

It belongs to the OMP decarboxylase family. Type 1 subfamily. Homodimer.

The catalysed reaction is orotidine 5'-phosphate + H(+) = UMP + CO2. Its pathway is pyrimidine metabolism; UMP biosynthesis via de novo pathway; UMP from orotate: step 2/2. Catalyzes the decarboxylation of orotidine 5'-monophosphate (OMP) to uridine 5'-monophosphate (UMP). In Oenococcus oeni (strain ATCC BAA-331 / PSU-1), this protein is Orotidine 5'-phosphate decarboxylase.